Reading from the N-terminus, the 378-residue chain is MSHVDDGFRSLTLKRFPQTDDVNPLLAWEAADEYLLQQLDETEIRGPVLILNDTFGALSCALAEHSPYSIGDSYLSELGTRENLRHNGIAESSVTFLDSTADYPQAPGVVLIKVPKTLALLEQQLRALRKVVTVQTRIIAGAKARDIHTSTLELFEKVLGPTTTTLAWKKARLINCTFSHPQLADAPQTLSWKLEDTGWTIHNHANVFSRTGLDIGARFFMQHLPENLDGEIVDLGCGNGVIGLSLLAKNPQANVVFVDESPMAVDSSRLNVETNLPEAFERCEFMINNALSGVEPFRFNAVFCNPPFHQKHALTDNIAWEMFHHARRCLKINGELYIVANRHLDYFHKLKKIFGNCATIATNNKFVILKAVKQGRRR.

It belongs to the methyltransferase superfamily. RlmG family.

It is found in the cytoplasm. It catalyses the reaction guanosine(1835) in 23S rRNA + S-adenosyl-L-methionine = N(2)-methylguanosine(1835) in 23S rRNA + S-adenosyl-L-homocysteine + H(+). Specifically methylates the guanine in position 1835 (m2G1835) of 23S rRNA. The protein is Ribosomal RNA large subunit methyltransferase G of Salmonella paratyphi B (strain ATCC BAA-1250 / SPB7).